The following is a 240-amino-acid chain: Biotin--[acetyl-CoA-carboxylase] ligase (240 aa).

Residues Met-1 to Asp-176 enclose the BPL/LPL catalytic domain. Residues Ser-7–Asn-9, Gln-30, Arg-34–Arg-36, and Lys-102 each bind biotin.

Belongs to the biotin--protein ligase family.

The catalysed reaction is biotin + L-lysyl-[protein] + ATP = N(6)-biotinyl-L-lysyl-[protein] + AMP + diphosphate + H(+). Functionally, activates biotin to form biotinyl-5'-adenylate and transfers the biotin moiety to biotin-accepting proteins. This Paracoccus denitrificans protein is Biotin--[acetyl-CoA-carboxylase] ligase (birA).